Consider the following 182-residue polypeptide: Early upstream open reading frame (182 aa).

This sequence belongs to the EUO family.

This Chlamydophila psittaci (strain ATCC VR-125 / 6BC) (Chlamydia psittaci) protein is Early upstream open reading frame.